Here is a 353-residue protein sequence, read N- to C-terminus: Uroporphyrinogen decarboxylase (353 aa).

Substrate is bound by residues 30 to 34 (RQAGR), Asp-79, Tyr-154, Ser-209, and His-332.

The protein belongs to the uroporphyrinogen decarboxylase family. As to quaternary structure, homodimer.

Its subcellular location is the cytoplasm. It carries out the reaction uroporphyrinogen III + 4 H(+) = coproporphyrinogen III + 4 CO2. Its pathway is porphyrin-containing compound metabolism; protoporphyrin-IX biosynthesis; coproporphyrinogen-III from 5-aminolevulinate: step 4/4. In terms of biological role, catalyzes the decarboxylation of four acetate groups of uroporphyrinogen-III to yield coproporphyrinogen-III. This is Uroporphyrinogen decarboxylase from Mycobacterium ulcerans (strain Agy99).